Consider the following 80-residue polypeptide: MEGLIEAIKSNDLVAARKLFAEAMAARTIDLIKEEKIAIARNFLIEGEEPEDEDEDEDDEDSDDKDDKKDEDSDEDEDDE.

A disordered region spans residues F43 to E80. Residues E46–D64 are compositionally biased toward acidic residues.

Functionally, the production of one phage particle requires 250 copies of PIP. During head maturation, PIP is cleaved to form the stable head constituent, internal peptide II. The chain is Prehead core component PIP (67) from Escherichia coli (Bacteriophage T4).